The sequence spans 264 residues: MKIALGIQYNGKNYCGWQRQENVASVQEQLEKAISFVANQPCQIFCAGRTDSGVHATGQVVHFETDAIRAEKAWSFGVNANLPDDISVSWAKCVTDDFHARFSATARRYRYILYCNKLRSAILPEGVTHCHLDLDHHLMHQAGQALLGEQDFSSFRAAQCQSHTPFRNVHHLKVVRRGQYIIVDIQANAFVHHMVRNIVGSLIEVGAGHQPVEWIGWLLAQKDRRLAAPTAKPEGLYLVNVSYPTQFQLPQNALGPLFLENELG.

D51 serves as the catalytic Nucleophile. Residue Y109 participates in substrate binding.

It belongs to the tRNA pseudouridine synthase TruA family. In terms of assembly, homodimer.

The enzyme catalyses uridine(38/39/40) in tRNA = pseudouridine(38/39/40) in tRNA. Functionally, formation of pseudouridine at positions 38, 39 and 40 in the anticodon stem and loop of transfer RNAs. This Pasteurella multocida (strain Pm70) protein is tRNA pseudouridine synthase A.